The primary structure comprises 169 residues: Menaquinol:cytochrome c reductase iron-sulfur subunit (169 aa).

In terms of domain architecture, Rieske spans 62–160 (EPKRFDFKVK…FEVKDGKLYL (99 aa)). 4 residues coordinate [2Fe-2S] cluster: cysteine 102, histidine 104, cysteine 123, and histidine 126. The cysteines at positions 107 and 125 are disulfide-linked.

The protein belongs to the Rieske iron-sulfur protein family. The main subunits of the menaquinol:cytochrome c complex are a Rieske-type iron-sulfur protein (QcrA), a cytochrome b (QcrB) and a cytochrome c (QcrC). [2Fe-2S] cluster is required as a cofactor.

In terms of biological role, component of the menaquinol:cytochrome c reductase complex. The Rieske protein is a high potential 2Fe-2S protein. This chain is Menaquinol:cytochrome c reductase iron-sulfur subunit (qcrA), found in Geobacillus thermodenitrificans.